A 368-amino-acid polypeptide reads, in one-letter code: Histidinol-phosphate aminotransferase (368 aa).

Position 215 is an N6-(pyridoxal phosphate)lysine (Lys-215).

This sequence belongs to the class-II pyridoxal-phosphate-dependent aminotransferase family. Histidinol-phosphate aminotransferase subfamily. As to quaternary structure, homodimer. Pyridoxal 5'-phosphate serves as cofactor.

It catalyses the reaction L-histidinol phosphate + 2-oxoglutarate = 3-(imidazol-4-yl)-2-oxopropyl phosphate + L-glutamate. It functions in the pathway amino-acid biosynthesis; L-histidine biosynthesis; L-histidine from 5-phospho-alpha-D-ribose 1-diphosphate: step 7/9. In Buchnera aphidicola subsp. Acyrthosiphon pisum (strain 5A), this protein is Histidinol-phosphate aminotransferase.